We begin with the raw amino-acid sequence, 194 residues long: Peptidyl-tRNA hydrolase (194 aa).

Y17 provides a ligand contact to tRNA. The active-site Proton acceptor is the H22. TRNA-binding residues include Y68, N70, and N116.

It belongs to the PTH family. Monomer.

The protein localises to the cytoplasm. The enzyme catalyses an N-acyl-L-alpha-aminoacyl-tRNA + H2O = an N-acyl-L-amino acid + a tRNA + H(+). Its function is as follows. Hydrolyzes ribosome-free peptidyl-tRNAs (with 1 or more amino acids incorporated), which drop off the ribosome during protein synthesis, or as a result of ribosome stalling. In terms of biological role, catalyzes the release of premature peptidyl moieties from peptidyl-tRNA molecules trapped in stalled 50S ribosomal subunits, and thus maintains levels of free tRNAs and 50S ribosomes. The sequence is that of Peptidyl-tRNA hydrolase from Marinomonas sp. (strain MWYL1).